A 535-amino-acid polypeptide reads, in one-letter code: Methylmalonate-semialdehyde/malonate-semialdehyde dehydrogenase [acylating], mitochondrial (535 aa).

The N-terminal 32 residues, 1 to 32, are a transit peptide targeting the mitochondrion; that stretch reads MAAAVAAAAAMRSRILQVSSKVNATWYPASSF. N6-acetyllysine; alternate is present on residues lysine 47, lysine 52, lysine 55, and lysine 76. N6-succinyllysine; alternate occurs at positions 47, 52, 55, and 76. N6-acetyllysine is present on lysine 87. An N6-acetyllysine; alternate mark is found at lysine 117 and lysine 129. An N6-succinyllysine; alternate mark is found at lysine 117 and lysine 129. Residues alanine 183, phenylalanine 185, lysine 209, glutamate 212, arginine 213, and serine 262 each contribute to the NAD(+) site. Serine 262 is modified (phosphoserine). Lysine 298 is modified (N6-acetyllysine). The Nucleophile role is filled by cysteine 317. N6-acetyllysine occurs at positions 330 and 331. Lysine 364 and lysine 376 each carry N6-acetyllysine; alternate. An N6-succinyllysine; alternate mark is found at lysine 364 and lysine 376. Serine 380 bears the Phosphoserine mark. Position 391 is an N6-succinyllysine (lysine 391). Glutamate 417 lines the NAD(+) pocket. Position 500 is an N6-acetyllysine (lysine 500). Lysine 517 is modified (N6-succinyllysine).

This sequence belongs to the aldehyde dehydrogenase family. Homotetramer. Acetylation of Lys-55; Lys-117 and Lys-331 is observed in liver mitochondria from fasted mice but not from fed mice.

Its subcellular location is the mitochondrion. It carries out the reaction 3-oxopropanoate + NAD(+) + CoA + H2O = hydrogencarbonate + acetyl-CoA + NADH + H(+). The enzyme catalyses 2-methyl-3-oxopropanoate + NAD(+) + CoA + H2O = propanoyl-CoA + hydrogencarbonate + NADH + H(+). The catalysed reaction is (R)-2-methyl-3-oxopropanoate + NAD(+) + CoA + H2O = propanoyl-CoA + hydrogencarbonate + NADH + H(+). It catalyses the reaction (S)-2-methyl-3-oxopropanoate + NAD(+) + CoA + H2O = propanoyl-CoA + hydrogencarbonate + NADH + H(+). Its function is as follows. Malonate and methylmalonate semialdehyde dehydrogenase involved in the catabolism of valine, thymine, and compounds catabolized by way of beta-alanine, including uracil and cytidine. In Mus musculus (Mouse), this protein is Methylmalonate-semialdehyde/malonate-semialdehyde dehydrogenase [acylating], mitochondrial.